A 439-amino-acid polypeptide reads, in one-letter code: Tryptophan synthase beta chain 2 (439 aa).

Lys-99 bears the N6-(pyridoxal phosphate)lysine mark.

It belongs to the TrpB family. In terms of assembly, tetramer of two alpha and two beta chains. The cofactor is pyridoxal 5'-phosphate.

It carries out the reaction (1S,2R)-1-C-(indol-3-yl)glycerol 3-phosphate + L-serine = D-glyceraldehyde 3-phosphate + L-tryptophan + H2O. Its pathway is amino-acid biosynthesis; L-tryptophan biosynthesis; L-tryptophan from chorismate: step 5/5. Functionally, the beta subunit is responsible for the synthesis of L-tryptophan from indole and L-serine. The chain is Tryptophan synthase beta chain 2 (trpB2) from Corynebacterium efficiens (strain DSM 44549 / YS-314 / AJ 12310 / JCM 11189 / NBRC 100395).